The sequence spans 261 residues: 6-phosphogluconolactonase (261 aa).

The protein belongs to the glucosamine/galactosamine-6-phosphate isomerase family. 6-phosphogluconolactonase subfamily.

It carries out the reaction 6-phospho-D-glucono-1,5-lactone + H2O = 6-phospho-D-gluconate + H(+). It participates in carbohydrate degradation; pentose phosphate pathway; D-ribulose 5-phosphate from D-glucose 6-phosphate (oxidative stage): step 2/3. In terms of biological role, hydrolysis of 6-phosphogluconolactone to 6-phosphogluconate. In Streptomyces coelicolor (strain ATCC BAA-471 / A3(2) / M145), this protein is 6-phosphogluconolactonase (pgl).